Consider the following 591-residue polypeptide: DEAD-box ATP-dependent RNA helicase 30 (591 aa).

The disordered stretch occupies residues 1–109 (MSSYDRRFAD…GRGGSSKREL (109 aa)). Gly residues predominate over residues 72–103 (FSVGRGGGRGGYGQYGDRNGGGNWGGGGGRGG). The short motif at 165 to 193 (KMFQDANFPDNILEAIAKLGFTEPTPIQA) is the Q motif element. The region spanning 196–371 (WPMALKGRDL…RQFLRDPYKA (176 aa)) is the Helicase ATP-binding domain. An ATP-binding site is contributed by 209–216 (AETGSGKT). The DEAD box signature appears at 319 to 322 (DEAD). The region spanning 399-544 (RLLTLLKQLM…VVPPTLSALV (146 aa)) is the Helicase C-terminal domain. The interval 547–591 (SGSGYGGSGGGRNFRPRGGGRGGGFGDKRSRSTSNFVPHGGKRTW) is disordered. Residues 549–571 (SGYGGSGGGRNFRPRGGGRGGGF) are compositionally biased toward gly residues.

This sequence belongs to the DEAD box helicase family. DDX5/DBP2 subfamily.

The protein resides in the nucleus. The catalysed reaction is ATP + H2O = ADP + phosphate + H(+). Its function is as follows. ATP-dependent RNA helicase involved nonsense-mediated mRNA decay and ribosome biogenesis through rRNA processing. This chain is DEAD-box ATP-dependent RNA helicase 30 (RH30), found in Arabidopsis thaliana (Mouse-ear cress).